A 176-amino-acid polypeptide reads, in one-letter code: Probable non-specific lipid-transfer protein 1 (176 aa).

Positions 1–37 (MRTVSAPSAVALVVIVAAGLAWTSLASVAPPAPAPGS) are cleaved as a signal peptide. 4 cysteine pairs are disulfide-bonded: C41/C89, C51/C66, C67/C112, and C87/C128. Residues 139–176 (QLPVSLRHGPVTGPSDPAHKARLERPQIRVPPPAPEKA) form a disordered region. Residues 155–165 (PAHKARLERPQ) are compositionally biased toward basic and acidic residues. The segment covering 167-176 (RVPPPAPEKA) has biased composition (pro residues).

The protein belongs to the plant LTP family.

Functionally, plant non-specific lipid-transfer proteins transfer phospholipids as well as galactolipids across membranes. May play a role in wax or cutin deposition in the cell walls of expanding epidermal cells and certain secretory tissues. The polypeptide is Probable non-specific lipid-transfer protein 1 (Parietaria judaica (Pellitory-of-the-wall)).